The following is a 565-amino-acid chain: Tyrosine-protein phosphatase non-receptor type 5 (565 aa).

The span at 1 to 16 (MNYEGARSERENHAAD) shows a compositional bias: basic and acidic residues. The disordered stretch occupies residues 1-80 (MNYEGARSER…KPPPRGAGSH (80 aa)). Positions 56 to 75 (MPPPPPPSPPSDPAQKPPPR) are enriched in pro residues. The next 2 membrane-spanning stretches (helical) occupy residues 88–108 (LCLFAASQFLLACGVLWFSGY) and 146–166 (LLLVFLSVGLVLVTTLVWHLL). The interval 169–189 (PPEPPTPLPPEDRRQSVSRQP) is disordered. Serine 245 carries the phosphoserine; by PKA modification. Threonine 255 carries the phosphothreonine; by MAPK modification. Serine 268 is subject to Phosphoserine; by MAPK. The Tyrosine-protein phosphatase domain maps to 300–555 (LQAEFFEIPM…QFVHHVMSLY (256 aa)). Residues aspartate 461, 496–502 (CSAGIGR), and glutamine 540 each bind substrate. The active-site Phosphocysteine intermediate is cysteine 496.

This sequence belongs to the protein-tyrosine phosphatase family. Non-receptor class subfamily. In terms of processing, phosphorylation at Ser-245 by PKA deactivates PTPN5. Phosphorylation at Thr-255 and Ser-268 by MAPKs stabilizes the phosphatase, dephosphorylation of these sites results in ubiquitin-mediated degradation of the active phosphatase.

The protein localises to the endoplasmic reticulum membrane. It carries out the reaction O-phospho-L-tyrosyl-[protein] + H2O = L-tyrosyl-[protein] + phosphate. Functionally, may regulate the activity of several effector molecules involved in synaptic plasticity and neuronal cell survival, including MAPKs, Src family kinases and NMDA receptors. This chain is Tyrosine-protein phosphatase non-receptor type 5 (PTPN5), found in Homo sapiens (Human).